The chain runs to 316 residues: Lys-63-specific deubiquitinase BRCC36 (316 aa).

An N-acetylalanine modification is found at Ala2. Positions 12–179 constitute an MPN domain; that stretch reads VHLESDAFLV…YTCFQSIQAQ (168 aa). Zn(2+) contacts are provided by His122, His124, and Asp135. Positions 122–135 match the JAMM motif motif; the sequence is HSHPHITVWPSHVD. Position 258 is a phosphoserine (Ser258).

It belongs to the peptidase M67A family. BRCC36 subfamily. In terms of assembly, component of the ARISC complex, at least composed of UIMC1/RAP80, ABRAXAS1, BRCC3/BRCC36, BABAM2 and BABAM1/NBA1. Component of the BRCA1-A complex, at least composed of BRCA1, BARD1, UIMC1/RAP80, ABRAXAS1, BRCC3/BRCC36, BABAM2 and BABAM1/NBA1. In the BRCA1-A complex, interacts directly with ABRAXAS1 and BABAM2. Component of the BRISC complex, at least composed of ABRAXAS2, BRCC3/BRCC36, BABAM2 and BABAM1/NBA1. Identified in a complex with SHMT2 and the other subunits of the BRISC complex. In the BRISC complex, interacts directly with ABRAXAS2. Identified in a complex with ABRAXAS2 and NUMA1. The BRISC complex interacts with the CSN complex. Component of the BRCA1/BRCA2 containing complex (BRCC), which also contains BRCA1, BRCA2, BARD1, BABAM2 and RAD51. BRCC is a ubiquitin E3 ligase complex that enhances cellular survival following DNA damage. Interacts with BRCA1. Binds polyubiquitin. Interacts with PWWP2B. Interacts with HDAC1; this interaction is enhanced in the presence of PWWP2B. Requires Zn(2+) as cofactor.

The protein localises to the nucleus. Its subcellular location is the cytoplasm. It is found in the cytoskeleton. The protein resides in the spindle pole. In terms of biological role, metalloprotease that specifically cleaves 'Lys-63'-linked polyubiquitin chains. Does not have activity toward 'Lys-48'-linked polyubiquitin chains. Component of the BRCA1-A complex, a complex that specifically recognizes 'Lys-63'-linked ubiquitinated histones H2A and H2AX at DNA lesions sites, leading to target the BRCA1-BARD1 heterodimer to sites of DNA damage at double-strand breaks (DSBs). In the BRCA1-A complex, it specifically removes 'Lys-63'-linked ubiquitin on histones H2A and H2AX, antagonizing the RNF8-dependent ubiquitination at double-strand breaks (DSBs). Catalytic subunit of the BRISC complex, a multiprotein complex that specifically cleaves 'Lys-63'-linked ubiquitin in various substrates. Mediates the specific 'Lys-63'-specific deubiquitination associated with the COP9 signalosome complex (CSN), via the interaction of the BRISC complex with the CSN complex. The BRISC complex is required for normal mitotic spindle assembly and microtubule attachment to kinetochores via its role in deubiquitinating NUMA1. Plays a role in interferon signaling via its role in the deubiquitination of the interferon receptor IFNAR1; deubiquitination increases IFNAR1 activity by enhancing its stability and cell surface expression. Acts as a regulator of the NLRP3 inflammasome by mediating deubiquitination of NLRP3, leading to NLRP3 inflammasome assembly. Down-regulates the response to bacterial lipopolysaccharide (LPS) via its role in IFNAR1 deubiquitination. Deubiquitinates HDAC1 and PWWP2B leading to their stabilization. This chain is Lys-63-specific deubiquitinase BRCC36 (BRCC3), found in Callithrix jacchus (White-tufted-ear marmoset).